The following is a 645-amino-acid chain: Acetyl-coenzyme A synthetase (645 aa).

CoA is bound by residues 190–193, Thr-309, and Asn-333; that span reads RGGR. Residues 385–387, 409–414, Asp-498, and Arg-513 each bind ATP; these read GEP and DTWWQT. Residue Ser-521 coordinates CoA. Residue Arg-524 participates in ATP binding. Positions 535, 537, and 540 each coordinate Mg(2+). Residue Arg-582 participates in CoA binding. At Lys-607 the chain carries N6-acetyllysine.

It belongs to the ATP-dependent AMP-binding enzyme family. Mg(2+) is required as a cofactor. Acetylated. Deacetylation by the SIR2-homolog deacetylase activates the enzyme.

It carries out the reaction acetate + ATP + CoA = acetyl-CoA + AMP + diphosphate. In terms of biological role, catalyzes the conversion of acetate into acetyl-CoA (AcCoA), an essential intermediate at the junction of anabolic and catabolic pathways. AcsA undergoes a two-step reaction. In the first half reaction, AcsA combines acetate with ATP to form acetyl-adenylate (AcAMP) intermediate. In the second half reaction, it can then transfer the acetyl group from AcAMP to the sulfhydryl group of CoA, forming the product AcCoA. The sequence is that of Acetyl-coenzyme A synthetase from Beijerinckia indica subsp. indica (strain ATCC 9039 / DSM 1715 / NCIMB 8712).